We begin with the raw amino-acid sequence, 546 residues long: 2-isopropylmalate synthase (546 aa).

In terms of domain architecture, Pyruvate carboxyltransferase spans 8 to 271; it reads ILIFDTTLRD…NSFFKRNPDS (264 aa). The Mn(2+) site is built by Asp17, His208, His210, and Asn244. Positions 408-546 are regulatory domain; sequence QLSLVQVSCG…NNTYISNPAN (139 aa).

It belongs to the alpha-IPM synthase/homocitrate synthase family. LeuA type 1 subfamily. Homodimer. Mn(2+) is required as a cofactor.

It is found in the cytoplasm. It catalyses the reaction 3-methyl-2-oxobutanoate + acetyl-CoA + H2O = (2S)-2-isopropylmalate + CoA + H(+). The protein operates within amino-acid biosynthesis; L-leucine biosynthesis; L-leucine from 3-methyl-2-oxobutanoate: step 1/4. Catalyzes the condensation of the acetyl group of acetyl-CoA with 3-methyl-2-oxobutanoate (2-ketoisovalerate) to form 3-carboxy-3-hydroxy-4-methylpentanoate (2-isopropylmalate). This Prochlorococcus marinus (strain MIT 9301) protein is 2-isopropylmalate synthase.